Reading from the N-terminus, the 349-residue chain is Hydroxymethylglutaryl-CoA synthase (349 aa).

Positions 30 and 31 each coordinate (3S)-3-hydroxy-3-methylglutaryl-CoA. Catalysis depends on glutamate 82, which acts as the Proton donor/acceptor. Positions 114 and 155 each coordinate (3S)-3-hydroxy-3-methylglutaryl-CoA. Cysteine 114 (acyl-thioester intermediate) is an active-site residue. Arginine 203 is a binding site for CoA. Residues threonine 205 and histidine 238 each coordinate (3S)-3-hydroxy-3-methylglutaryl-CoA. Histidine 238 functions as the Proton donor/acceptor in the catalytic mechanism. Lysine 243 lines the CoA pocket. 2 residues coordinate (3S)-3-hydroxy-3-methylglutaryl-CoA: asparagine 270 and serine 300.

Belongs to the thiolase-like superfamily. Archaeal HMG-CoA synthase family. As to quaternary structure, interacts with acetoacetyl-CoA thiolase that catalyzes the precedent step in the pathway and with a DUF35 protein. The acetoacetyl-CoA thiolase/HMG-CoA synthase complex channels the intermediate via a fused CoA-binding site, which allows for efficient coupling of the endergonic thiolase reaction with the exergonic HMGCS reaction.

It carries out the reaction acetoacetyl-CoA + acetyl-CoA + H2O = (3S)-3-hydroxy-3-methylglutaryl-CoA + CoA + H(+). The protein operates within metabolic intermediate biosynthesis; (R)-mevalonate biosynthesis; (R)-mevalonate from acetyl-CoA: step 2/3. In terms of biological role, catalyzes the condensation of acetyl-CoA with acetoacetyl-CoA to form 3-hydroxy-3-methylglutaryl-CoA (HMG-CoA). Functions in the mevalonate (MVA) pathway leading to isopentenyl diphosphate (IPP), a key precursor for the biosynthesis of isoprenoid compounds that are building blocks of archaeal membrane lipids. In Methanococcus maripaludis (strain C5 / ATCC BAA-1333), this protein is Hydroxymethylglutaryl-CoA synthase.